The chain runs to 203 residues: Protein S40-6 (203 aa).

The tract at residues 1 to 33 (MAKGRKPTTMNRSDRYLGSYTYGDSHGNSVTDE) is disordered.

Belongs to the senescence regulator S40 family.

The protein resides in the cytoplasm. This Arabidopsis thaliana (Mouse-ear cress) protein is Protein S40-6.